Here is a 78-residue protein sequence, read N- to C-terminus: Large ribosomal subunit protein bL28 (78 aa).

Positions 1–28 (MSRRCQVRGTKPEFGNNVSHSQRHTKRR) are disordered.

The protein belongs to the bacterial ribosomal protein bL28 family.

The sequence is that of Large ribosomal subunit protein bL28 from Cutibacterium acnes (strain DSM 16379 / KPA171202) (Propionibacterium acnes).